The following is a 175-amino-acid chain: Chorismate pyruvate-lyase (175 aa).

The substrate site is built by methionine 36, arginine 78, leucine 116, and glutamate 157.

It belongs to the UbiC family. Monomer.

The protein localises to the cytoplasm. The enzyme catalyses chorismate = 4-hydroxybenzoate + pyruvate. Its pathway is cofactor biosynthesis; ubiquinone biosynthesis. Functionally, removes the pyruvyl group from chorismate, with concomitant aromatization of the ring, to provide 4-hydroxybenzoate (4HB) for the ubiquinone pathway. This Hamiltonella defensa subsp. Acyrthosiphon pisum (strain 5AT) protein is Chorismate pyruvate-lyase.